A 119-amino-acid chain; its full sequence is Protein TusC (119 aa).

Belongs to the DsrF/TusC family. Heterohexamer, formed by a dimer of trimers. The hexameric TusBCD complex contains 2 copies each of TusB, TusC and TusD. The TusBCD complex interacts with TusE.

It is found in the cytoplasm. In terms of biological role, part of a sulfur-relay system required for 2-thiolation of 5-methylaminomethyl-2-thiouridine (mnm(5)s(2)U) at tRNA wobble positions. In Sodalis glossinidius (strain morsitans), this protein is Protein TusC.